We begin with the raw amino-acid sequence, 362 residues long: 2-aminoethylphosphonate--pyruvate transaminase (362 aa).

At K193 the chain carries N6-(pyridoxal phosphate)lysine.

This sequence belongs to the class-V pyridoxal-phosphate-dependent aminotransferase family. PhnW subfamily. In terms of assembly, homodimer. Requires pyridoxal 5'-phosphate as cofactor.

It carries out the reaction (2-aminoethyl)phosphonate + pyruvate = phosphonoacetaldehyde + L-alanine. In terms of biological role, involved in phosphonate degradation. The polypeptide is 2-aminoethylphosphonate--pyruvate transaminase (Bacteroides fragilis (strain YCH46)).